The primary structure comprises 198 residues: Chromophore lyase CpcT/CpeT 3 (198 aa).

This sequence belongs to the CpcT/CpeT biliprotein lyase family.

Covalently attaches a chromophore to Cys residue(s) of phycobiliproteins. This is Chromophore lyase CpcT/CpeT 3 from Synechococcus sp. (strain JA-3-3Ab) (Cyanobacteria bacterium Yellowstone A-Prime).